We begin with the raw amino-acid sequence, 206 residues long: Thymidylate kinase (206 aa).

11-18 lines the ATP pocket; sequence GIDGAGKT.

This sequence belongs to the thymidylate kinase family.

The enzyme catalyses dTMP + ATP = dTDP + ADP. Phosphorylation of dTMP to form dTDP in both de novo and salvage pathways of dTTP synthesis. In Burkholderia cenocepacia (strain HI2424), this protein is Thymidylate kinase.